Reading from the N-terminus, the 265-residue chain is 3-methyl-2-oxobutanoate hydroxymethyltransferase (265 aa).

The Mg(2+) site is built by Asp-45 and Asp-84. Residues 45–46 (DS), Asp-84, and Lys-112 each bind 3-methyl-2-oxobutanoate. Residue Glu-114 participates in Mg(2+) binding. The active-site Proton acceptor is Glu-181.

Belongs to the PanB family. In terms of assembly, homodecamer; pentamer of dimers. It depends on Mg(2+) as a cofactor.

Its subcellular location is the cytoplasm. It carries out the reaction 3-methyl-2-oxobutanoate + (6R)-5,10-methylene-5,6,7,8-tetrahydrofolate + H2O = 2-dehydropantoate + (6S)-5,6,7,8-tetrahydrofolate. The protein operates within cofactor biosynthesis; (R)-pantothenate biosynthesis; (R)-pantoate from 3-methyl-2-oxobutanoate: step 1/2. Its function is as follows. Catalyzes the reversible reaction in which hydroxymethyl group from 5,10-methylenetetrahydrofolate is transferred onto alpha-ketoisovalerate to form ketopantoate. This Yersinia pestis bv. Antiqua (strain Antiqua) protein is 3-methyl-2-oxobutanoate hydroxymethyltransferase.